We begin with the raw amino-acid sequence, 807 residues long: Potassium transporter 9 (807 aa).

Residues 1 to 59 are Cytoplasmic-facing; the sequence is MAERVEASSVPEGENTIEEREVGAMWELEQKLDQPMDEEANKLNNMYREKGLSMLMLLR. A helical membrane pass occupies residues 60-80; sequence LSFQSLGIVYGDLGTSPLYVF. Residues 81–96 are Extracellular-facing; that stretch reads YNTFPDGIDDSEDVIG. The chain crosses the membrane as a helical span at residues 97 to 117; that stretch reads ALSLIIYSLLLIPLIKYVFIV. Topologically, residues 118-185 are cytoplasmic; the sequence is CKANDNGQGG…EGKEWRKRAL (68 aa). Residues 186-206 form a helical membrane-spanning segment; sequence LVVVLLGTCMMIGDGILTPAI. The Extracellular segment spans residues 207 to 225; that stretch reads SVLSATGGIKVNNPKMSGD. The chain crosses the membrane as a helical span at residues 226–246; that stretch reads IVVLVAIVILIGLFSMQHYGT. Residues 247 to 248 lie on the Cytoplasmic side of the membrane; the sequence is DK. A helical transmembrane segment spans residues 249 to 269; it reads VGWLFAPIVLIWFLFIGATGM. Topologically, residues 270-299 are extracellular; sequence YNICKYDTSVLKAFSPTYIYLYFKRRGRDG. Residues 300 to 320 form a helical membrane-spanning segment; sequence WISLGGILLSITGTEALYADI. The Cytoplasmic portion of the chain corresponds to 321 to 322; sequence AY. Residues 323-343 traverse the membrane as a helical segment; that stretch reads FPLLAIQLAFTFFVFPCLLLA. Residues 344–369 are Extracellular-facing; the sequence is YCGQAAYLVIHKEHYQDAFYASIPDS. The helical transmembrane segment at 370–390 threads the bilayer; that stretch reads VYWPMFIVATGAAIVGSQATI. Topologically, residues 391 to 417 are cytoplasmic; it reads SGTYSIVKQAVAHGCFPRVKIVHTSKK. The chain crosses the membrane as a helical span at residues 418–438; it reads FLGQIYCPDINWILMLGCIAV. The Extracellular portion of the chain corresponds to 439 to 454; that stretch reads TASFKKQSQIGNAYGT. The helical transmembrane segment at 455 to 475 threads the bilayer; it reads AVVLVMLVTTLLMVLIMLLVW. Topologically, residues 476-481 are cytoplasmic; it reads HCHWIL. Residues 482-502 form a helical membrane-spanning segment; sequence VLIFTFLSFFVELSYFSAVIF. At 503–507 the chain is on the extracellular side; it reads KIDEG. A helical transmembrane segment spans residues 508 to 528; it reads GWVPLIIAAISLLVMSVWHYA. Residues 529-807 lie on the Cytoplasmic side of the membrane; sequence TVKKYEFEMH…LLNVGQVFYV (279 aa).

It belongs to the HAK/KUP transporter (TC 2.A.72.3) family.

It localises to the cell membrane. In terms of biological role, putative potassium transporter. The chain is Potassium transporter 9 (POT9) from Arabidopsis thaliana (Mouse-ear cress).